A 335-amino-acid chain; its full sequence is Holliday junction branch migration complex subunit RuvB (335 aa).

Positions 1-183 (MDERIISSET…FGVIDHLEFY (183 aa)) are large ATPase domain (RuvB-L). ATP contacts are provided by residues Leu22, Arg23, Gly64, Lys67, Thr68, Thr69, 130–132 (EDY), Arg173, Tyr183, and Arg220. Position 68 (Thr68) interacts with Mg(2+). The small ATPAse domain (RuvB-S) stretch occupies residues 184–254 (TEEQLTEIVL…LAKEALTLLQ (71 aa)). The tract at residues 257–335 (PRGLDTIDQK…HLGISYEKEV (79 aa)) is head domain (RuvB-H). The DNA site is built by Arg293, Arg312, and Arg317.

This sequence belongs to the RuvB family. As to quaternary structure, homohexamer. Forms an RuvA(8)-RuvB(12)-Holliday junction (HJ) complex. HJ DNA is sandwiched between 2 RuvA tetramers; dsDNA enters through RuvA and exits via RuvB. An RuvB hexamer assembles on each DNA strand where it exits the tetramer. Each RuvB hexamer is contacted by two RuvA subunits (via domain III) on 2 adjacent RuvB subunits; this complex drives branch migration. In the full resolvosome a probable DNA-RuvA(4)-RuvB(12)-RuvC(2) complex forms which resolves the HJ.

It is found in the cytoplasm. It catalyses the reaction ATP + H2O = ADP + phosphate + H(+). The RuvA-RuvB-RuvC complex processes Holliday junction (HJ) DNA during genetic recombination and DNA repair, while the RuvA-RuvB complex plays an important role in the rescue of blocked DNA replication forks via replication fork reversal (RFR). RuvA specifically binds to HJ cruciform DNA, conferring on it an open structure. The RuvB hexamer acts as an ATP-dependent pump, pulling dsDNA into and through the RuvAB complex. RuvB forms 2 homohexamers on either side of HJ DNA bound by 1 or 2 RuvA tetramers; 4 subunits per hexamer contact DNA at a time. Coordinated motions by a converter formed by DNA-disengaged RuvB subunits stimulates ATP hydrolysis and nucleotide exchange. Immobilization of the converter enables RuvB to convert the ATP-contained energy into a lever motion, pulling 2 nucleotides of DNA out of the RuvA tetramer per ATP hydrolyzed, thus driving DNA branch migration. The RuvB motors rotate together with the DNA substrate, which together with the progressing nucleotide cycle form the mechanistic basis for DNA recombination by continuous HJ branch migration. Branch migration allows RuvC to scan DNA until it finds its consensus sequence, where it cleaves and resolves cruciform DNA. This chain is Holliday junction branch migration complex subunit RuvB, found in Listeria monocytogenes serotype 4a (strain HCC23).